The chain runs to 106 residues: Iron-sulfur cluster assembly protein CyaY (106 aa).

Belongs to the frataxin family.

In terms of biological role, involved in iron-sulfur (Fe-S) cluster assembly. May act as a regulator of Fe-S biogenesis. The sequence is that of Iron-sulfur cluster assembly protein CyaY from Cronobacter sakazakii (strain ATCC BAA-894) (Enterobacter sakazakii).